A 314-amino-acid chain; its full sequence is Ketimine reductase mu-crystallin (314 aa).

Position 47 (Arg-47) interacts with 3,3',5-triiodo-L-thyronine. Positions 91, 92, 119, 144, 146, 147, 168, 169, 170, 173, 205, and 206 each coordinate NADPH. Glu-257 contacts 3,3',5-triiodo-L-thyronine. An NADPH-binding site is contributed by Ser-292.

It belongs to the ornithine cyclodeaminase/mu-crystallin family. In terms of assembly, homodimer. Binds the thyroid hormone triiodothyronine (T3); T3 binding inhibits enzymatic activity.

The protein localises to the cytoplasm. The catalysed reaction is L-pipecolate + NAD(+) = Delta(1)-piperideine-2-carboxylate + NADH + H(+). It carries out the reaction L-pipecolate + NADP(+) = Delta(1)-piperideine-2-carboxylate + NADPH + H(+). It catalyses the reaction L-proline + NADP(+) = 1-pyrroline-2-carboxylate + NADPH + H(+). The enzyme catalyses L-proline + NAD(+) = 1-pyrroline-2-carboxylate + NADH + H(+). The catalysed reaction is (3R)-1,4-thiomorpholine-3-carboxylate + NAD(+) = 3,4-dehydrothiomorpholine-3-carboxylate + NADH + 2 H(+). It carries out the reaction (3R)-1,4-thiomorpholine-3-carboxylate + NADP(+) = 3,4-dehydrothiomorpholine-3-carboxylate + NADPH + 2 H(+). It catalyses the reaction (S)-cystathionine ketimine + NADH + 2 H(+) = (3R,5S)-2,3,5,6,7-pentahydro-1,4-thiazepine-3,5-dicarboxylate + NAD(+). The enzyme catalyses (S)-cystathionine ketimine + NADPH + 2 H(+) = (3R,5S)-2,3,5,6,7-pentahydro-1,4-thiazepine-3,5-dicarboxylate + NADP(+). The catalysed reaction is (R)-lanthionine ketimine + NADPH + 2 H(+) = (3R,5R)-1,4-thiomorpholine-3,5-dicarboxylate + NADP(+). It carries out the reaction Delta(2)-thiazoline-2-carboxylate + NADPH + 2 H(+) = L-thiazolidine-2-carboxylate + NADP(+). Its function is as follows. Catalyzes the NAD(P)H-dependent reduction of imine double bonds of a number of cyclic ketimine substrates, including sulfur-containing cyclic ketimines. Under physiological conditions, it efficiently catalyzes delta(1)-piperideine-2-carboxylate (P2C) and delta(1)-pyrroline-2-carboxylate (Pyr2C) reduction, suggesting a central role in lysine and glutamate metabolism. Additional substrates are (S)-cystathionine ketimine (CysK), 3,4-dehydrothiomorpholine-3-carboxylate (AECK), and (R)-lanthionine ketimine (LK) that is reduced at very low rate compared to other substrates. Also catalyzes the NAD(P)H-dependent reduction of delta(2)-thiazoline-2-carboxylate (T2C). The sequence is that of Ketimine reductase mu-crystallin (CRYM) from Bos taurus (Bovine).